Reading from the N-terminus, the 732-residue chain is E3 ubiquitin-protein ligase DCST1 (732 aa).

The Cytoplasmic segment spans residues 1–46; it reads MAFLSSTLHSLGIFEKISRIKEVLKNRLLDLTKRRDQAREQQRKRP. Residues 47–67 form a helical membrane-spanning segment; sequence HTIIQGLLLWSLPVSWIRFLW. Topologically, residues 68-76 are extracellular; the sequence is RQPGEFPVT. The chain crosses the membrane as a helical span at residues 77-97; that stretch reads AFLLGAGTGGLLAIGLFQLLV. The Cytoplasmic portion of the chain corresponds to 98–107; that stretch reads NPMNIYEEQK. A helical transmembrane segment spans residues 108 to 128; sequence VVALYCLASLGAIGWGTSPHI. Over 129 to 394 the chain is Extracellular; it reads RCASLLLVPK…VRDYVRQQET (266 aa). 4 N-linked (GlcNAc...) asparagine glycosylation sites follow: Asn-184, Asn-217, Asn-346, and Asn-374. A helical membrane pass occupies residues 395–415; that stretch reads YLQWAMGLLHVLLSCTFLLVF. Residues 416-489 lie on the Cytoplasmic side of the membrane; sequence HSAFSYMDHY…RYVIRELLET (74 aa). Residues 490 to 510 form a helical membrane-spanning segment; it reads LPIVLLLLVLCAIDWALYSVF. The Extracellular portion of the chain corresponds to 511–576; the sequence is DTIRQHSFVQ…PQPISLNARD (66 aa). Asn-551 is a glycosylation site (N-linked (GlcNAc...) asparagine). A helical membrane pass occupies residues 577 to 597; it reads YFKASLPTLLLVCLCLAQAFG. The Cytoplasmic segment spans residues 598–732; sequence YRLRRVIAAF…DSNDDAVYGD (135 aa). The RING-type; degenerate zinc finger occupies 672 to 711; the sequence is CVVCQAMETPDSYVCPTPDCKALYCRSCWDDMQRLCPVCT.

Interacts with STAT2; the interaction results in STAT2 'Lys-48'-linked ubiquitination leading to its proteasomal degradation. Interacts with DCST2. Expressed in testis.

It localises to the cell membrane. The protein localises to the cytoplasmic vesicle. It is found in the secretory vesicle. Its subcellular location is the acrosome membrane. It catalyses the reaction S-ubiquitinyl-[E2 ubiquitin-conjugating enzyme]-L-cysteine + [acceptor protein]-L-lysine = [E2 ubiquitin-conjugating enzyme]-L-cysteine + N(6)-ubiquitinyl-[acceptor protein]-L-lysine.. It functions in the pathway protein modification; protein ubiquitination. In terms of biological role, E3 ubiquitin-protein ligase which mediates 'Lys-48'-linked ubiquitination of STAT2 and induces its proteasomal degradation thereby negatively regulating type-I-interferon signaling. Functionally, essential sperm cell-surface protein required for sperm-egg fusion and fertilization. This is E3 ubiquitin-protein ligase DCST1 (Dcst1) from Mus musculus (Mouse).